Here is a 714-residue protein sequence, read N- to C-terminus: Methylmalonyl-CoA mutase (714 aa).

Positions 584–714 (RPRILIAKMG…VLNLISQHHD (131 aa)) constitute a B12-binding domain. His597 contacts adenosylcob(III)alamin.

It belongs to the methylmalonyl-CoA mutase family. In terms of assembly, homodimer. Interacts with ArgK. The cofactor is adenosylcob(III)alamin.

It catalyses the reaction (R)-methylmalonyl-CoA = succinyl-CoA. Functionally, catalyzes the interconversion of succinyl-CoA and methylmalonyl-CoA. Could be part of a pathway that converts succinate to propionate. The polypeptide is Methylmalonyl-CoA mutase (scpA) (Escherichia coli (strain K12)).